The following is a 1690-amino-acid chain: DNA-directed RNA polymerase subunit beta' (1690 aa).

Cys-63, Cys-65, Cys-78, and Cys-81 together coordinate Zn(2+). Mg(2+) is bound by residues Asp-753, Asp-755, and Asp-757. Positions 1107, 1295, 1302, and 1305 each coordinate Zn(2+).

It belongs to the RNA polymerase beta' chain family. As to quaternary structure, the RNAP catalytic core consists of 2 alpha, 1 beta, 1 beta' and 1 omega subunit. When a sigma factor is associated with the core the holoenzyme is formed, which can initiate transcription. Mg(2+) serves as cofactor. Requires Zn(2+) as cofactor.

It carries out the reaction RNA(n) + a ribonucleoside 5'-triphosphate = RNA(n+1) + diphosphate. Its function is as follows. DNA-dependent RNA polymerase catalyzes the transcription of DNA into RNA using the four ribonucleoside triphosphates as substrates. This chain is DNA-directed RNA polymerase subunit beta', found in Thermotoga maritima (strain ATCC 43589 / DSM 3109 / JCM 10099 / NBRC 100826 / MSB8).